A 108-amino-acid chain; its full sequence is uncharacterized protein (108 aa).

This is an uncharacterized protein from Acanthamoeba polyphaga (Amoeba).